The following is a 546-amino-acid chain: 5'-nucleotidase domain-containing protein 3 (546 aa).

Asp100 (nucleophile) is an active-site residue. Residues Asp100 and Asp102 each coordinate Mg(2+). Residue Asp102 is the Proton donor of the active site. Substrate is bound at residue 249–257 (KDSIRDVHI). Asp387 contributes to the Mg(2+) binding site.

It belongs to the 5'(3')-deoxyribonucleotidase family. Requires Mg(2+) as cofactor.

This Mus musculus (Mouse) protein is 5'-nucleotidase domain-containing protein 3 (Nt5dc3).